A 477-amino-acid chain; its full sequence is MKILFVAAEVSPLAKVGGMGDVVGSLPKVLHQLGHDVRVFMPYYGFIGDKIDVPKEPVWKGEAMFQQFAVYQSYLPDTKIPLYLFGHPAFDSRRIYGGDDEAWRFTFFSNGAAEFAWNHWKPEIIHCHDWHTGMIPVWMHQSPDIATVFTIHNLAYQGPWRGLLETMTWCPWYMQGDNVMAAAIQFANRVTTVSPTYAQQIQTPAYGEKLEGLLSYLSGNLVGILNGIDTEIYNPAEDRFISNVFDADSLDKRVKNKIAIQEETGLEINRNAMVVGIVARLVEQKGIDLVIQILDRFMSYTDSQLIILGTGDRHYETQLWQMASRFPGRMAVQLLHNDALSRRVYAGADVFLMPSRFEPCGLSQLMAMRYGCIPIVRRTGGLVDTVSFYDPINEAGTGYCFDRYEPLDCFTAMVRAWEGFRFKADWQKLQQRAMRADFSWYRSAGEYIKVYKGVVGKPEELSPMEEEKIAELTASYR.

K15 lines the ADP-alpha-D-glucose pocket.

This sequence belongs to the glycosyltransferase 1 family. Bacterial/plant glycogen synthase subfamily.

It carries out the reaction [(1-&gt;4)-alpha-D-glucosyl](n) + ADP-alpha-D-glucose = [(1-&gt;4)-alpha-D-glucosyl](n+1) + ADP + H(+). It participates in glycan biosynthesis; glycogen biosynthesis. Functionally, synthesizes alpha-1,4-glucan chains using ADP-glucose. The sequence is that of Glycogen synthase 1 (glgA1) from Synechocystis sp. (strain ATCC 27184 / PCC 6803 / Kazusa).